The chain runs to 402 residues: Multidrug resistance protein MdtH (402 aa).

Residues 1–12 are Cytoplasmic-facing; the sequence is MSRVSQARNLGK. The chain crosses the membrane as a helical span at residues 13–33; sequence YFLLIDNMLVVLGFFVVFPLI. At 34 to 98 the chain is on the periplasmic side; the sequence is SIRFVDQMGW…GFATMGIAHE (65 aa). Residues 99–116 traverse the membrane as a helical segment; it reads PWLLWFSCLLSGLGGTLF. Topologically, residues 117-138 are cytoplasmic; that stretch reads DPPRSALVVKLIRPQQRCRFFS. Residues 139–159 traverse the membrane as a helical segment; it reads LLMMQDSAGAVIGALLGSWLL. At 160 to 164 the chain is on the periplasmic side; the sequence is QYDFR. Residues 165-185 form a helical membrane-spanning segment; sequence LVCATGAVLFVLCAAFNAWLL. Residues 186–213 are Cytoplasmic-facing; that stretch reads PAWKLSTVRTPVREGMTRVMRDKRFVTY. Residues 214–234 form a helical membrane-spanning segment; that stretch reads VLTLAGYYMLAVQVMLMLPIM. Residues 235-243 lie on the Periplasmic side of the membrane; that stretch reads VNDVAGAPS. A helical transmembrane segment spans residues 244-264; the sequence is AVKWMYAIEACLSLTLLYPIA. Over 265–276 the chain is Cytoplasmic; that stretch reads RWSEKHFRLEHR. Residues 277-297 traverse the membrane as a helical segment; it reads LMAGLLIMSLSMMPVGMVSGL. At 298–299 the chain is on the periplasmic side; it reads QQ. A helical membrane pass occupies residues 300 to 320; that stretch reads LFTLICLFYIGSIIAEPARET. At 321–339 the chain is on the cytoplasmic side; it reads LSALLADARARGSYMGFSR. Residues 340-360 traverse the membrane as a helical segment; the sequence is LGLAIGGAIGYIGGGWLFDLG. Topologically, residues 361-367 are periplasmic; sequence KSAHQPE. Residues 368–388 traverse the membrane as a helical segment; sequence LPWMMLGIIGIFTFLALGWQF. Residues 389–402 are Cytoplasmic-facing; sequence SQKRATRRLLERDA.

It belongs to the major facilitator superfamily. DHA1 family. MdtH (TC 2.A.1.2.21) subfamily.

It is found in the cell inner membrane. This Shigella sonnei (strain Ss046) protein is Multidrug resistance protein MdtH.